A 321-amino-acid polypeptide reads, in one-letter code: MAQLPPKIPNMTQHWPDFSSQKLSPFSTPTATAVATATTTVQNPSWVDEFLDFSASRRGNHRRSISDSIAFLEAPTVSIEDHQFDRFDDEQFMSMFTDDDNLHSNPSHINNKNNNVGPTGSSSNTSTPSNSFNDDNKELPPSDHNMNNNINNNYNDEVQSQCKMEPEDGTASNNNSGDSSGNRILDPKRVKRILANRQSAQRSRVRKLQYISELERSVTSLQAEVSVLSPRVAFLDHQRLLLNVDNSALKQRIAALSQDKLFKDAHQEALKREIERLRQVYNQQSLTNVENANHLSATGAGATPAVDIKSSVETEQLLNVS.

Residues 97-189 (TDDDNLHSNP…SGNRILDPKR (93 aa)) are disordered. Low complexity-rich tracts occupy residues 110-133 (NNKN…NSFN), 145-155 (NMNNNINNNYN), and 172-182 (SNNNSGDSSGN). One can recognise a bZIP domain in the interval 186–238 (DPKRVKRILANRQSAQRSRVRKLQYISELERSVTSLQAEVSVLSPRVAFLDHQ). The basic motif stretch occupies residues 188 to 207 (KRVKRILANRQSAQRSRVRK). The tract at residues 214–235 (LERSVTSLQAEVSVLSPRVAFL) is leucine-zipper.

In terms of assembly, forms heterodimers with BZIP18, BZIP43 and VIP1/BZIP51. Expressed in vascular tissues of leaves, stems and siliques, anthers, filaments, tapetum, mature pollen grains, pistil vascular tissues and papillar cells, and funiculi.

It localises to the nucleus. In terms of biological role, transcriptional activator involved in the sporophytic control of cell wall patterning and gametophytic control of pollen development. May play a role in the control of metabolic pathways regulating cellular transport and lipid metabolism. This chain is Basic leucine zipper 34, found in Arabidopsis thaliana (Mouse-ear cress).